Consider the following 194-residue polypeptide: uncharacterized protein (194 aa).

An N-terminal signal peptide occupies residues 1–22 (MNKVTKTAIAGLLALFAGNAAA). Cys38 and Cys78 are oxidised to a cystine.

It belongs to the fimbrial protein family.

The protein resides in the fimbrium. Part of the yraHIJK fimbrial operon. Could contribute to adhesion to various surfaces in specific environmental niches. Increases adhesion to eukaryotic T24 bladder epithelial cells in the absence of fim operon. This is an uncharacterized protein from Escherichia coli (strain K12).